The following is a 562-amino-acid chain: Membrane protein insertase YidC (562 aa).

Residues 1-21 (MDIKRTILIVALAIVTYVGVL) traverse the membrane as a helical segment. The segment at 42–74 (TAPGIPDTAAGNNGSASADVPSATGNTTSAAPL) is disordered. Transmembrane regions (helical) follow at residues 343-363 (LELT…FWLL), 369-389 (ILGN…GLFF), 439-459 (LGGC…YWVL), 470-490 (WILW…PIIM), and 517-537 (PIIF…YWVV).

The protein belongs to the OXA1/ALB3/YidC family. Type 1 subfamily. As to quaternary structure, interacts with the Sec translocase complex via SecD. Specifically interacts with transmembrane segments of nascent integral membrane proteins during membrane integration.

The protein resides in the cell inner membrane. Its function is as follows. Required for the insertion and/or proper folding and/or complex formation of integral membrane proteins into the membrane. Involved in integration of membrane proteins that insert both dependently and independently of the Sec translocase complex, as well as at least some lipoproteins. Aids folding of multispanning membrane proteins. This Pseudomonas syringae pv. tomato (strain ATCC BAA-871 / DC3000) protein is Membrane protein insertase YidC.